Here is a 353-residue protein sequence, read N- to C-terminus: S-adenosylmethionine:tRNA ribosyltransferase-isomerase (353 aa).

It belongs to the QueA family. As to quaternary structure, monomer.

The protein localises to the cytoplasm. It carries out the reaction 7-aminomethyl-7-carbaguanosine(34) in tRNA + S-adenosyl-L-methionine = epoxyqueuosine(34) in tRNA + adenine + L-methionine + 2 H(+). Its pathway is tRNA modification; tRNA-queuosine biosynthesis. Functionally, transfers and isomerizes the ribose moiety from AdoMet to the 7-aminomethyl group of 7-deazaguanine (preQ1-tRNA) to give epoxyqueuosine (oQ-tRNA). In Burkholderia vietnamiensis (strain G4 / LMG 22486) (Burkholderia cepacia (strain R1808)), this protein is S-adenosylmethionine:tRNA ribosyltransferase-isomerase.